The sequence spans 961 residues: Exportin-T (961 aa).

It belongs to the exportin family.

It is found in the cytoplasm. Its subcellular location is the nucleus. In terms of biological role, mediates the nuclear export of aminoacylated tRNAs. In Danio rerio (Zebrafish), this protein is Exportin-T (xpot).